We begin with the raw amino-acid sequence, 149 residues long: Ribonuclease VapC2 (149 aa).

Positions 11-149 (IFFDSNILIY…RVDFLEIIEI (139 aa)) constitute a PINc domain. 2 residues coordinate Mg(2+): D14 and D116.

The protein belongs to the PINc/VapC protein family. Mg(2+) is required as a cofactor.

In terms of biological role, toxic component of a type II toxin-antitoxin (TA) system. An RNase. Its cognate antitoxin is VapB2. This chain is Ribonuclease VapC2, found in Methanocaldococcus jannaschii (strain ATCC 43067 / DSM 2661 / JAL-1 / JCM 10045 / NBRC 100440) (Methanococcus jannaschii).